A 111-amino-acid chain; its full sequence is V-type proton ATPase subunit G 2 (111 aa).

The protein belongs to the V-ATPase G subunit family. V-ATPase is a heteromultimeric enzyme composed of a peripheral catalytic V1 complex (components A to H) attached to an integral membrane V0 proton pore complex (components: a, c, c', c'' and d).

Functionally, catalytic subunit of the peripheral V1 complex of vacuolar ATPase (V-ATPase). V-ATPase is responsible for acidifying a variety of intracellular compartments in eukaryotic cells. This Nicotiana tabacum (Common tobacco) protein is V-type proton ATPase subunit G 2 (VATG2).